Consider the following 359-residue polypeptide: S-adenosylmethionine-dependent nucleotide dehydratase RSAD2 (359 aa).

The segment at 43-67 (QTPARKISRPESRTSKQKEGSRAPF) is disordered. The segment covering 50–63 (SRPESRTSKQKEGS) has biased composition (basic and acidic residues). One can recognise a Radical SAM core domain in the interval 67 to 287 (FTTPSSVNYH…LERHQSIQCL (221 aa)). Positions 81, 85, and 88 each coordinate [4Fe-4S] cluster.

Belongs to the radical SAM superfamily. RSAD2 family. Requires [4Fe-4S] cluster as cofactor.

It is found in the endoplasmic reticulum membrane. In terms of biological role, interferon-inducible iron-sulfur (4FE-4S) cluster-binding antiviral protein which plays a major role in the cell antiviral state induced by type I and type II interferon. The sequence is that of S-adenosylmethionine-dependent nucleotide dehydratase RSAD2 from Danio rerio (Zebrafish).